The primary structure comprises 691 residues: Elongation factor G (691 aa).

In terms of domain architecture, tr-type G spans 12–286; sequence NKLRNIGIMA…GIVRYLPSPL (275 aa). Residues 21-28, 85-89, and 139-142 each bind GTP; these read AHIDAGKT, DTPGH, and NKMD.

This sequence belongs to the TRAFAC class translation factor GTPase superfamily. Classic translation factor GTPase family. EF-G/EF-2 subfamily.

Its subcellular location is the cytoplasm. In terms of biological role, catalyzes the GTP-dependent ribosomal translocation step during translation elongation. During this step, the ribosome changes from the pre-translocational (PRE) to the post-translocational (POST) state as the newly formed A-site-bound peptidyl-tRNA and P-site-bound deacylated tRNA move to the P and E sites, respectively. Catalyzes the coordinated movement of the two tRNA molecules, the mRNA and conformational changes in the ribosome. The protein is Elongation factor G of Fervidobacterium nodosum (strain ATCC 35602 / DSM 5306 / Rt17-B1).